The sequence spans 61 residues: Small ribosomal subunit protein uS14 (61 aa).

Zn(2+) is bound by residues cysteine 24, cysteine 27, cysteine 40, and cysteine 43.

The protein belongs to the universal ribosomal protein uS14 family. Zinc-binding uS14 subfamily. Part of the 30S ribosomal subunit. Contacts proteins S3 and S10. Requires Zn(2+) as cofactor.

Binds 16S rRNA, required for the assembly of 30S particles and may also be responsible for determining the conformation of the 16S rRNA at the A site. This chain is Small ribosomal subunit protein uS14, found in Nautilia profundicola (strain ATCC BAA-1463 / DSM 18972 / AmH).